Here is a 317-residue protein sequence, read N- to C-terminus: Glycine--tRNA ligase alpha subunit (317 aa).

This sequence belongs to the class-II aminoacyl-tRNA synthetase family. Tetramer of two alpha and two beta subunits.

Its subcellular location is the cytoplasm. The catalysed reaction is tRNA(Gly) + glycine + ATP = glycyl-tRNA(Gly) + AMP + diphosphate. This chain is Glycine--tRNA ligase alpha subunit, found in Pseudomonas fluorescens (strain ATCC BAA-477 / NRRL B-23932 / Pf-5).